The following is a 109-amino-acid chain: Iron-sulfur cluster assembly protein CyaY (109 aa).

This sequence belongs to the frataxin family.

Functionally, involved in iron-sulfur (Fe-S) cluster assembly. May act as a regulator of Fe-S biogenesis. The chain is Iron-sulfur cluster assembly protein CyaY from Albidiferax ferrireducens (strain ATCC BAA-621 / DSM 15236 / T118) (Rhodoferax ferrireducens).